Reading from the N-terminus, the 569-residue chain is 2-succinyl-5-enolpyruvyl-6-hydroxy-3-cyclohexene-1-carboxylate synthase (569 aa).

This sequence belongs to the TPP enzyme family. MenD subfamily. In terms of assembly, homodimer. Requires Mg(2+) as cofactor. Mn(2+) is required as a cofactor. It depends on thiamine diphosphate as a cofactor.

It catalyses the reaction isochorismate + 2-oxoglutarate + H(+) = 5-enolpyruvoyl-6-hydroxy-2-succinyl-cyclohex-3-ene-1-carboxylate + CO2. It functions in the pathway quinol/quinone metabolism; 1,4-dihydroxy-2-naphthoate biosynthesis; 1,4-dihydroxy-2-naphthoate from chorismate: step 2/7. It participates in quinol/quinone metabolism; menaquinone biosynthesis. In terms of biological role, catalyzes the thiamine diphosphate-dependent decarboxylation of 2-oxoglutarate and the subsequent addition of the resulting succinic semialdehyde-thiamine pyrophosphate anion to isochorismate to yield 2-succinyl-5-enolpyruvyl-6-hydroxy-3-cyclohexene-1-carboxylate (SEPHCHC). The chain is 2-succinyl-5-enolpyruvyl-6-hydroxy-3-cyclohexene-1-carboxylate synthase from Shewanella halifaxensis (strain HAW-EB4).